Consider the following 554-residue polypeptide: uncharacterized protein (554 aa).

The N-terminal stretch at 1–33 (MKKILIIILFIIIFIVLIYSGLWFVIMFSLSHS) is a signal peptide.

This is an uncharacterized protein from Rickettsia prowazekii (strain Madrid E).